The sequence spans 302 residues: NAD kinase 2 (302 aa).

Aspartate 78 functions as the Proton acceptor in the catalytic mechanism. Residues 78-79 (DG), 152-153 (NE), aspartate 182, 193-198 (TAYALS), and alanine 217 contribute to the NAD(+) site.

It belongs to the NAD kinase family. A divalent metal cation is required as a cofactor.

The protein resides in the cytoplasm. The catalysed reaction is NAD(+) + ATP = ADP + NADP(+) + H(+). Its function is as follows. Involved in the regulation of the intracellular balance of NAD and NADP, and is a key enzyme in the biosynthesis of NADP. Catalyzes specifically the phosphorylation on 2'-hydroxyl of the adenosine moiety of NAD to yield NADP. The sequence is that of NAD kinase 2 from Prochlorococcus marinus (strain MIT 9313).